The chain runs to 583 residues: Chloroplast sensor kinase, chloroplastic (583 aa).

The transit peptide at 1-50 (MSSIYLHGLSRRRRIGSVIVAIYMLDSCGAFLSASGSGRYPGFSYRGLSV) directs the protein to the chloroplast. The interval 97–277 (LFQELALSQL…SMDTERAALQ (181 aa)) is GAF. C115 provides a ligand contact to [3Fe-4S] cluster. The residue at position 292 (H292) is a Phosphohistidine; by autocatalysis. The interval 412 to 442 (AASGSNGPSNSTTSFSGNGSDVSTYTEDDGA) is disordered. Positions 414–431 (SGSNGPSNSTTSFSGNGS) are enriched in low complexity. Residues 447–583 (SSLFSEMDLE…ALDWTLRKHW (137 aa)) form the Histidine kinase domain.

Belongs to the chloroplast sensor kinase protein family. In terms of assembly, oligomerizes. It depends on [3Fe-4S] cluster as a cofactor. Autophosphorylates, possibly on His-292.

The protein localises to the plastid. The protein resides in the chloroplast stroma. The enzyme catalyses ATP + protein L-histidine = ADP + protein N-phospho-L-histidine.. In terms of biological role, sensor kinase that senses the plastoquinone (PQ) redox state involved in stoichiometry adjustment of both photosystems (e.g. long-term adaptation via transcriptional regulation of reaction center genes of photosystems I and II) and state transitions (e.g. short-term adaptation involving reversible post-translational phosphorylation of light-harvesting complex II, LHC II), thus linking photosynthesis with gene expression in chloroplasts. Reduced PQ suppresses its autophosphorylation activity. The protein is Chloroplast sensor kinase, chloroplastic of Phaeodactylum tricornutum (strain CCAP 1055/1).